The following is a 427-amino-acid chain: Trigger factor (427 aa).

A PPIase FKBP-type domain is found at 165–250 (GDTVVIDFEG…LHEIQEQVPA (86 aa)).

Belongs to the FKBP-type PPIase family. Tig subfamily.

The protein localises to the cytoplasm. It catalyses the reaction [protein]-peptidylproline (omega=180) = [protein]-peptidylproline (omega=0). Functionally, involved in protein export. Acts as a chaperone by maintaining the newly synthesized protein in an open conformation. Functions as a peptidyl-prolyl cis-trans isomerase. The protein is Trigger factor of Sulfurovum sp. (strain NBC37-1).